The following is a 118-amino-acid chain: Acidic phospholipase A2 homolog (118 aa).

Disulfide bonds link cysteine 11/cysteine 70, cysteine 25/cysteine 117, cysteine 27/cysteine 43, cysteine 42/cysteine 98, cysteine 49/cysteine 91, cysteine 59/cysteine 84, and cysteine 77/cysteine 89.

Belongs to the phospholipase A2 family. Group I subfamily. A49 sub-subfamily. As to expression, expressed by the venom gland.

It localises to the secreted. In terms of biological role, snake venom phospholipase A2 (PLA2) homolog that lacks both catalytic and neurotoxicity activities. The sequence is that of Acidic phospholipase A2 homolog from Bungarus fasciatus (Banded krait).